The following is a 1366-amino-acid chain: DNA-directed RNA polymerase subunit beta' (1366 aa).

The span at 1-23 (MTSSKPKKSSRVRKTTKNSKKNH) shows a compositional bias: basic residues. Residues 1–37 (MTSSKPKKSSRVRKTTKNSKKNHNTMMPLLPKTPPSF) are disordered. Cys248, Cys315, Cys322, and Cys325 together coordinate Zn(2+). Residues 1304 to 1366 (TAILDDPSDE…LQEEGLLSDG (63 aa)) are disordered. Low complexity predominate over residues 1354–1366 (LEGLQEEGLLSDG).

This sequence belongs to the RNA polymerase beta' chain family. RpoC2 subfamily. As to quaternary structure, in cyanobacteria the RNAP catalytic core is composed of 2 alpha, 1 beta, 1 beta', 1 gamma and 1 omega subunit. When a sigma factor is associated with the core the holoenzyme is formed, which can initiate transcription. Requires Zn(2+) as cofactor.

The catalysed reaction is RNA(n) + a ribonucleoside 5'-triphosphate = RNA(n+1) + diphosphate. Its function is as follows. DNA-dependent RNA polymerase catalyzes the transcription of DNA into RNA using the four ribonucleoside triphosphates as substrates. This chain is DNA-directed RNA polymerase subunit beta', found in Prochlorococcus marinus subsp. pastoris (strain CCMP1986 / NIES-2087 / MED4).